The sequence spans 308 residues: Ribosomal RNA large subunit methyltransferase F (308 aa).

The protein belongs to the methyltransferase superfamily. METTL16/RlmF family.

It localises to the cytoplasm. It carries out the reaction adenosine(1618) in 23S rRNA + S-adenosyl-L-methionine = N(6)-methyladenosine(1618) in 23S rRNA + S-adenosyl-L-homocysteine + H(+). In terms of biological role, specifically methylates the adenine in position 1618 of 23S rRNA. This is Ribosomal RNA large subunit methyltransferase F from Salmonella arizonae (strain ATCC BAA-731 / CDC346-86 / RSK2980).